The primary structure comprises 405 residues: Riboflavin biosynthesis protein RibBA (405 aa).

A DHBP synthase region spans residues 1-205; sequence MEQIKLDSIA…IKDLIEYRLT (205 aa). D-ribulose 5-phosphate contacts are provided by residues 30–31, Asp35, 144–148, and Glu168; these read RE and RVGHT. Glu31 contributes to the Mg(2+) binding site. His147 serves as a coordination point for Mg(2+). The GTP cyclohydrolase II stretch occupies residues 206 to 405; that stretch reads HESLVKREIG…KMGHTILKKD (200 aa). Residue 256-260 coordinates GTP; it reads RVHSS. Zn(2+) is bound by residues Cys261, Cys272, and Cys274. GTP is bound by residues Gln277, 299–301, and Thr321; that span reads EGR. The active-site Proton acceptor; for GTP cyclohydrolase activity is the Asp333. The active-site Nucleophile; for GTP cyclohydrolase activity is the Arg335. 2 residues coordinate GTP: Thr356 and Lys361.

It in the N-terminal section; belongs to the DHBP synthase family. This sequence in the C-terminal section; belongs to the GTP cyclohydrolase II family. Requires Mg(2+) as cofactor. The cofactor is Mn(2+). Zn(2+) is required as a cofactor.

It catalyses the reaction D-ribulose 5-phosphate = (2S)-2-hydroxy-3-oxobutyl phosphate + formate + H(+). It carries out the reaction GTP + 4 H2O = 2,5-diamino-6-hydroxy-4-(5-phosphoribosylamino)-pyrimidine + formate + 2 phosphate + 3 H(+). Its pathway is cofactor biosynthesis; riboflavin biosynthesis; 2-hydroxy-3-oxobutyl phosphate from D-ribulose 5-phosphate: step 1/1. It functions in the pathway cofactor biosynthesis; riboflavin biosynthesis; 5-amino-6-(D-ribitylamino)uracil from GTP: step 1/4. In terms of biological role, catalyzes the conversion of D-ribulose 5-phosphate to formate and 3,4-dihydroxy-2-butanone 4-phosphate. Catalyzes the conversion of GTP to 2,5-diamino-6-ribosylamino-4(3H)-pyrimidinone 5'-phosphate (DARP), formate and pyrophosphate. In Cytophaga hutchinsonii (strain ATCC 33406 / DSM 1761 / CIP 103989 / NBRC 15051 / NCIMB 9469 / D465), this protein is Riboflavin biosynthesis protein RibBA.